The sequence spans 593 residues: Solute carrier family 13 member 2 (593 aa).

The next 4 helical transmembrane spans lie at 11–31 (YRMYLLVFLLPISLLPLPILV), 53–73 (ALPLAVTALLPLCLFPMMGIM), 86–106 (TNVLFIGGLLLAIAVEHWNLH), and 121–141 (PALLILGFMVVTAFLSMWISN). Over residues 164 to 184 (SNVEEGSDNPTFELQEPSPQK) the composition is skewed to polar residues. Residues 164-204 (SNVEEGSDNPTFELQEPSPQKETSKVDEKDNGQAQPLPAVP) are disordered. Over residues 185–194 (ETSKVDEKDN) the composition is skewed to basic and acidic residues. Helical transmembrane passes span 221-241 (GMSLCVCYSASIGGIATLTGT), 270-290 (FAFPIMVILLLLSWLWLQILF), 327-347 (PMSFAEKAVFILFVILVLLWF), 369-389 (VMVSDGSASILIGVFLFMVPS), 451-471 (LMPLQHVPPPATVFIICLLVA), 485-505 (LLLPILASMAQAICLHPLYVM), 514-534 (LAFMLPVATPPNAIVFSFGGL), and 543-563 (GIMLNIIGVLVIMLAINSWGV).

Belongs to the SLC13A/DASS transporter (TC 2.A.47) family. NADC subfamily. Abundant in kidney and small intestine.

It is found in the apical cell membrane. It carries out the reaction succinate(out) + 3 Na(+)(out) = succinate(in) + 3 Na(+)(in). The catalysed reaction is fumarate(out) + 3 Na(+)(out) = fumarate(in) + 3 Na(+)(in). It catalyses the reaction 2-oxoglutarate(out) + 3 Na(+)(out) = 2-oxoglutarate(in) + 3 Na(+)(in). With respect to regulation, li(+) decreases succinate transport in the presence of Na(+), by competing at one of the three cation binding sites. In terms of biological role, low-affinity sodium-dicarboxylate cotransporter, that mediates the entry of citric acid cycle intermediates, such as succinate, citrate, fumarate and alpha-ketoglutarate (2-oxoglutarate) into the small intestine and renal proximal tubule. Transports the dicarboxylate into the cell with a probable stoichiometry of 3 Na(+) for 1 divalent dicarboxylate, rendering the process electrogenic. Citrate is transported in protonated form as a divalent anion, rather than the trivalent form which is normally found in blood. Has a critical role in renal dicarboxylate transport. This is Solute carrier family 13 member 2 (SLC13A2) from Oryctolagus cuniculus (Rabbit).